The chain runs to 140 residues: Phosphoribosyl-AMP cyclohydrolase (140 aa).

D78 is a Mg(2+) binding site. C79 contacts Zn(2+). Mg(2+)-binding residues include D80 and D82. C96 and C103 together coordinate Zn(2+).

Belongs to the PRA-CH family. Homodimer. The cofactor is Mg(2+). Zn(2+) is required as a cofactor.

It is found in the cytoplasm. The enzyme catalyses 1-(5-phospho-beta-D-ribosyl)-5'-AMP + H2O = 1-(5-phospho-beta-D-ribosyl)-5-[(5-phospho-beta-D-ribosylamino)methylideneamino]imidazole-4-carboxamide. It participates in amino-acid biosynthesis; L-histidine biosynthesis; L-histidine from 5-phospho-alpha-D-ribose 1-diphosphate: step 3/9. Catalyzes the hydrolysis of the adenine ring of phosphoribosyl-AMP. The polypeptide is Phosphoribosyl-AMP cyclohydrolase (Ralstonia pickettii (strain 12J)).